The sequence spans 307 residues: Elongation factor Ts (307 aa).

Residues 80–83 (TDFV) form an involved in Mg(2+) ion dislocation from EF-Tu region.

It belongs to the EF-Ts family.

Its subcellular location is the cytoplasm. In terms of biological role, associates with the EF-Tu.GDP complex and induces the exchange of GDP to GTP. It remains bound to the aminoacyl-tRNA.EF-Tu.GTP complex up to the GTP hydrolysis stage on the ribosome. The chain is Elongation factor Ts from Rhizorhabdus wittichii (strain DSM 6014 / CCUG 31198 / JCM 15750 / NBRC 105917 / EY 4224 / RW1) (Sphingomonas wittichii).